The chain runs to 377 residues: Rhodopsin, long-wavelength (377 aa).

The Extracellular portion of the chain corresponds to 1–51 (MIAVSGPSYEAFSYGGQARFNNQTVVDKVPPDMLHLIDANWYQYPPLNPMW). A glycan (N-linked (GlcNAc...) asparagine) is linked at N22. The helical transmembrane segment at 52 to 76 (HGILGFVIGMLGFVSAMGNGMVVYI) threads the bilayer. Residues 77–88 (FLSTKSLRTPSN) are Cytoplasmic-facing. The helical transmembrane segment at 89-113 (LFVINLAISNFLMMFCMSPPMVINC) threads the bilayer. Over 114-128 (YYETWVLGPLFCQIY) the chain is Extracellular. The cysteines at positions 125 and 202 are disulfide-linked. Residues 129–148 (AMLGSLFGCGSIWTMTMIAF) traverse the membrane as a helical segment. Over 149–167 (DRYNVIVKGLSGKPLSING) the chain is Cytoplasmic. A helical membrane pass occupies residues 168–191 (ALIRIIAIWLFSLGWTIAPMFGWN). Over 192–215 (RYVPEGNMTACGTDYFNRGLLSAS) the chain is Extracellular. A glycan (N-linked (GlcNAc...) asparagine) is linked at N198. The chain crosses the membrane as a helical span at residues 216–243 (YLVCYGIWVYFVPLFLIIYSYWFIIQAV). The Cytoplasmic portion of the chain corresponds to 244–278 (AAHEKNMREQAKKMNVASLRSSENQNTSAECKLAK). A helical membrane pass occupies residues 279 to 302 (VALMTISLWFMAWTPYLVINFSGI). Over 303-309 (FNLVKIS) the chain is Extracellular. A helical membrane pass occupies residues 310–334 (PLFTIWGSLFAKANAVYNPIVYGIS). The residue at position 321 (K321) is an N6-(retinylidene)lysine. The Cytoplasmic segment spans residues 335-377 (HPKYRAALFAKFPSLACAAEPSSDAVSTTSGTTTVTDNEKSNA). Residues 357–370 (SDAVSTTSGTTTVT) are compositionally biased toward low complexity. The segment at 357 to 377 (SDAVSTTSGTTTVTDNEKSNA) is disordered.

It belongs to the G-protein coupled receptor 1 family. Opsin subfamily. In terms of processing, phosphorylated on some or all of the serine and threonine residues present in the C-terminal region.

The protein localises to the membrane. In terms of biological role, visual pigments are the light-absorbing molecules that mediate vision. They consist of an apoprotein, opsin, covalently linked to 11-cis-retinal. This is Rhodopsin, long-wavelength from Apis mellifera (Honeybee).